The primary structure comprises 749 residues: DNA topoisomerase 1 (749 aa).

The tract at residues 1–110 (MSDSEDVALS…PKKEDSVETD (110 aa)) is disordered. Positions 62-75 (LSKEKVNNKVKDEL) are enriched in basic and acidic residues. Positions 79–94 (PVTPKKTPKISKTPVS) are enriched in low complexity. Over residues 101 to 110 (PKKEDSVETD) the composition is skewed to basic and acidic residues. 3 interaction with DNA regions span residues 338-339 (KY), 401-406 (RAGGEK), and 493-495 (TAK). The region spanning 345 to 749 (NSSIKGISDM…IESTDENWRF (405 aa)) is the Topo IB-type catalytic domain. Tyr-707 (O-(3'-phospho-DNA)-tyrosine intermediate) is an active-site residue.

Belongs to the type IB topoisomerase family.

The protein localises to the nucleus. It is found in the nucleolus. It localises to the nucleoplasm. The enzyme catalyses ATP-independent breakage of single-stranded DNA, followed by passage and rejoining.. Its function is as follows. Releases the supercoiling and torsional tension of DNA introduced during the DNA replication and transcription by transiently cleaving and rejoining one strand of the DNA duplex. Introduces a single-strand break via transesterification at the specific target site 5'-[CT]CCTTp site in duplex DNA. The scissile phosphodiester is attacked by the catalytic tyrosine of the enzyme, resulting in the formation of a DNA-(3'-phosphotyrosyl)-enzyme intermediate and the expulsion of a 5'-OH DNA strand. The free DNA strand then undergoes passage around the unbroken strand thus removing DNA supercoils. Finally, in the religation step, the DNA 5'-OH attacks the covalent intermediate to expel the active-site tyrosine and restore the DNA phosphodiester backbone. The chain is DNA topoisomerase 1 (TOP1) from Candidozyma auris (Yeast).